A 414-amino-acid chain; its full sequence is Probable peptidoglycan glycosyltransferase FtsW (414 aa).

Over 1–12 the chain is Cytoplasmic; the sequence is MRLSLPRLKMPR. Residues 13–33 form a helical membrane-spanning segment; that stretch reads LPGFSILVWISTALKGWVMGS. The Periplasmic segment spans residues 34-47; the sequence is REKDTDSLIMYDRT. The chain crosses the membrane as a helical span at residues 48 to 68; the sequence is LLWLTFGLAAIGFIMVTSASM. The Cytoplasmic portion of the chain corresponds to 69–86; the sequence is PIGQRLTNDPFFFAKRDG. Residues 87–107 form a helical membrane-spanning segment; that stretch reads VYLILAFILAIITLRLPMEFW. Topologically, residues 108–111 are periplasmic; the sequence is QRYS. Residues 112–132 traverse the membrane as a helical segment; the sequence is ATMLLGSIILLMIVLVVGSSV. The Cytoplasmic portion of the chain corresponds to 133 to 174; that stretch reads KGASRWIDLGLLRIQPAELTKLSLFCYIANYLVRKGDEVRNN. The helical transmembrane segment at 175–194 threads the bilayer; that stretch reads LRGFLKPMGVILVLAVLLLA. Topologically, residues 195 to 197 are periplasmic; it reads QPD. Residues 198 to 217 form a helical membrane-spanning segment; that stretch reads LGTVVVLFVTTLAMLFLAGA. Residue lysine 218 is a topological domain, cytoplasmic. Residues 219 to 239 traverse the membrane as a helical segment; it reads LWQFIAIIGMGISAVVLLILA. The Periplasmic portion of the chain corresponds to 240–301; that stretch reads EPYRIRRVTA…PEAHTDFIFA (62 aa). A helical membrane pass occupies residues 302-322; the sequence is IIGEELGYVGVVLALLMVFFV. Residues 323 to 342 are Cytoplasmic-facing; the sequence is AFRAMSIGRKALEIDHRFSG. Residues 343–363 form a helical membrane-spanning segment; it reads FLACSIGIWFSFQALVNVGAA. Over 364–373 the chain is Periplasmic; it reads AGMLPTKGLT. Residues 374–394 traverse the membrane as a helical segment; that stretch reads LPLISYGGSSLLIMSTAIMML. Over 395–414 the chain is Cytoplasmic; that stretch reads LRIDYETRLEKAQAFVRGSR.

The protein belongs to the SEDS family. FtsW subfamily.

Its subcellular location is the cell inner membrane. The enzyme catalyses [GlcNAc-(1-&gt;4)-Mur2Ac(oyl-L-Ala-gamma-D-Glu-L-Lys-D-Ala-D-Ala)](n)-di-trans,octa-cis-undecaprenyl diphosphate + beta-D-GlcNAc-(1-&gt;4)-Mur2Ac(oyl-L-Ala-gamma-D-Glu-L-Lys-D-Ala-D-Ala)-di-trans,octa-cis-undecaprenyl diphosphate = [GlcNAc-(1-&gt;4)-Mur2Ac(oyl-L-Ala-gamma-D-Glu-L-Lys-D-Ala-D-Ala)](n+1)-di-trans,octa-cis-undecaprenyl diphosphate + di-trans,octa-cis-undecaprenyl diphosphate + H(+). It participates in cell wall biogenesis; peptidoglycan biosynthesis. Its function is as follows. Peptidoglycan polymerase that is essential for cell division. In Escherichia coli O157:H7, this protein is Probable peptidoglycan glycosyltransferase FtsW.